Consider the following 566-residue polypeptide: Putative ABC transporter ATP-binding protein BA_2641/GBAA_2641/BAS2461 (566 aa).

ABC transporter domains are found at residues 5 to 246 (ISFE…GLRE) and 300 to 533 (LKVE…ANLK). ATP-binding positions include 39–46 (GRSGSGKS) and 333–340 (GHNGAGKS).

The protein belongs to the ABC transporter superfamily.

Its subcellular location is the cell membrane. Probably part of an ABC transporter complex. Responsible for energy coupling to the transport system. The chain is Putative ABC transporter ATP-binding protein BA_2641/GBAA_2641/BAS2461 from Bacillus anthracis.